We begin with the raw amino-acid sequence, 281 residues long: MDGDNKTYTIYILSDSTGETAATMIRAALVQYTTKDVNIIRCKNVRTDTQAEAVIEECFERRGMLAYTVASQGLRAKIREMASGKGIPYFDLLGPLLSTLDTFFGQHSEDTVGALRAVDERYFKRIEAIEYTVKHDDGKTFAELDKADIVLVGISRTSKTPLSIFLSHKGWKVANVPLVLDTPLPEELFKIDQRRIVGLIIDMDSLQRIRKSRLEKFGQDPGGSYASMSHIAKEIEYAEKIFKVNRRWPVFNVTERALEETASEIVRIIAARLGLPDSVIF.

ADP is bound at residue 153 to 160; that stretch reads GISRTSKT.

The protein belongs to the pyruvate, phosphate/water dikinase regulatory protein family. PDRP subfamily.

The enzyme catalyses N(tele)-phospho-L-histidyl/L-threonyl-[pyruvate, phosphate dikinase] + ADP = N(tele)-phospho-L-histidyl/O-phospho-L-threonyl-[pyruvate, phosphate dikinase] + AMP + H(+). It catalyses the reaction N(tele)-phospho-L-histidyl/O-phospho-L-threonyl-[pyruvate, phosphate dikinase] + phosphate + H(+) = N(tele)-phospho-L-histidyl/L-threonyl-[pyruvate, phosphate dikinase] + diphosphate. In terms of biological role, bifunctional serine/threonine kinase and phosphorylase involved in the regulation of the pyruvate, phosphate dikinase (PPDK) by catalyzing its phosphorylation/dephosphorylation. The sequence is that of Putative pyruvate, phosphate dikinase regulatory protein from Bdellovibrio bacteriovorus (strain ATCC 15356 / DSM 50701 / NCIMB 9529 / HD100).